The chain runs to 86 residues: Small ribosomal subunit protein bS20 (86 aa).

It belongs to the bacterial ribosomal protein bS20 family.

Its function is as follows. Binds directly to 16S ribosomal RNA. This chain is Small ribosomal subunit protein bS20, found in Rhodococcus jostii (strain RHA1).